We begin with the raw amino-acid sequence, 142 residues long: Galactose-6-phosphate isomerase subunit LacA (142 aa).

This sequence belongs to the LacAB/RpiB family. In terms of assembly, heteromultimeric protein consisting of LacA and LacB.

It carries out the reaction aldehydo-D-galactose 6-phosphate = keto-D-tagatose 6-phosphate. The protein operates within carbohydrate metabolism; D-galactose 6-phosphate degradation; D-tagatose 6-phosphate from D-galactose 6-phosphate: step 1/1. The chain is Galactose-6-phosphate isomerase subunit LacA from Staphylococcus epidermidis (strain ATCC 35984 / DSM 28319 / BCRC 17069 / CCUG 31568 / BM 3577 / RP62A).